Reading from the N-terminus, the 858-residue chain is Bifunctional uridylyltransferase/uridylyl-removing enzyme (858 aa).

The uridylyltransferase stretch occupies residues 1-324 (MSAHAAPSPE…PATSGITRVL (324 aa)). Residues 325–681 (SPDRFVEKQG…ARPSPIGDAL (357 aa)) form a uridylyl-removing region. Residues 443 to 565 (VDQHILMVLR…VGNERYLTAL (123 aa)) enclose the HD domain. ACT domains lie at 682 to 761 (QVLV…PEPS) and 790 to 858 (ILSV…AIAV).

This sequence belongs to the GlnD family. Mg(2+) serves as cofactor.

It catalyses the reaction [protein-PII]-L-tyrosine + UTP = [protein-PII]-uridylyl-L-tyrosine + diphosphate. It carries out the reaction [protein-PII]-uridylyl-L-tyrosine + H2O = [protein-PII]-L-tyrosine + UMP + H(+). Its activity is regulated as follows. Uridylyltransferase (UTase) activity is inhibited by glutamine, while glutamine activates uridylyl-removing (UR) activity. Modifies, by uridylylation and deuridylylation, the PII regulatory proteins (GlnB and homologs), in response to the nitrogen status of the cell that GlnD senses through the glutamine level. Under low glutamine levels, catalyzes the conversion of the PII proteins and UTP to PII-UMP and PPi, while under higher glutamine levels, GlnD hydrolyzes PII-UMP to PII and UMP (deuridylylation). Thus, controls uridylylation state and activity of the PII proteins, and plays an important role in the regulation of nitrogen fixation and metabolism. The polypeptide is Bifunctional uridylyltransferase/uridylyl-removing enzyme (Burkholderia lata (strain ATCC 17760 / DSM 23089 / LMG 22485 / NCIMB 9086 / R18194 / 383)).